Consider the following 62-residue polypeptide: Large ribosomal subunit protein bL28 (62 aa).

Belongs to the bacterial ribosomal protein bL28 family.

The chain is Large ribosomal subunit protein bL28 from Caldicellulosiruptor bescii (strain ATCC BAA-1888 / DSM 6725 / KCTC 15123 / Z-1320) (Anaerocellum thermophilum).